The chain runs to 264 residues: MKILQQDDFGYWLLTQGSNLYLVNNELPFGIAKDIDLEGLQAMQIGEWKNHPLWLVAEQESDEREYVSLRNLLSLPEDEFHILSRGVEINHFLKTHKFCGKCGHKTQQTQDELAVQCIHCGYQTYPVICPSIIVAVRRGHEILLANHKRHYSPNGGIYTTLAGFVEVGETFEQAVQREVFEETGISIKNLRYFGSQPWAFPNSQMVGFLADYESGEITLQESEIHDAQWFSYDQPLPELPPTGTIARKLIHVTLELCKAEHKCD.

Arg-70 is a binding site for substrate. Residues Cys-99 and Cys-102 each contribute to the Zn(2+) site. Glu-112 provides a ligand contact to substrate. Cys-117 and Cys-120 together coordinate Zn(2+). Tyr-125 serves as a coordination point for substrate. The Nudix hydrolase domain occupies 126 to 253 (PVICPSIIVA…TIARKLIHVT (128 aa)). A divalent metal cation contacts are provided by Ala-162, Glu-178, and Glu-182. Positions 163 to 184 (GFVEVGETFEQAVQREVFEETG) match the Nudix box motif. 196-203 (QPWAFPNS) is a binding site for substrate. Glu-223 serves as a coordination point for a divalent metal cation. Residue Ala-246 participates in substrate binding.

This sequence belongs to the Nudix hydrolase family. NudC subfamily. As to quaternary structure, homodimer. It depends on Mg(2+) as a cofactor. Mn(2+) is required as a cofactor. Zn(2+) serves as cofactor.

The enzyme catalyses a 5'-end NAD(+)-phospho-ribonucleoside in mRNA + H2O = a 5'-end phospho-adenosine-phospho-ribonucleoside in mRNA + beta-nicotinamide D-ribonucleotide + 2 H(+). It carries out the reaction NAD(+) + H2O = beta-nicotinamide D-ribonucleotide + AMP + 2 H(+). It catalyses the reaction NADH + H2O = reduced beta-nicotinamide D-ribonucleotide + AMP + 2 H(+). MRNA decapping enzyme that specifically removes the nicotinamide adenine dinucleotide (NAD) cap from a subset of mRNAs by hydrolyzing the diphosphate linkage to produce nicotinamide mononucleotide (NMN) and 5' monophosphate mRNA. The NAD-cap is present at the 5'-end of some mRNAs and stabilizes RNA against 5'-processing. Has preference for mRNAs with a 5'-end purine. Catalyzes the hydrolysis of a broad range of dinucleotide pyrophosphates. The sequence is that of NAD-capped RNA hydrolase NudC from Haemophilus influenzae (strain 86-028NP).